A 626-amino-acid polypeptide reads, in one-letter code: Basic helix-loop-helix ARNT-like protein 1 (626 aa).

The disordered stretch occupies residues 1-60 (MADQRMDISSTISDFMSPGATDLLSSPLGTSGMDCNRKRKGSSTDYQESMDTDKDDPHGR). The residue at position 17 (S17) is a Phosphoserine; by GSK3-beta. At T21 the chain carries Phosphothreonine; by GSK3-beta. A Nuclear localization signal motif is present at residues 36–41 (NRKRKG). The span at 51–60 (DTDKDDPHGR) shows a compositional bias: basic and acidic residues. A bHLH domain is found at 72 to 125 (NAREAHSQIEKRRRDKMNSFIDELASLVPTCNAMSRKLDKLTVLRMAVQHMKTL). The residue at position 78 (S78) is a Phosphoserine. S90 is modified (phosphoserine; by CK2). Residues 142–152 (LSDDELKHLIL) carry the Nuclear export signal 1 motif. Positions 143–215 (SDDELKHLIL…EQLSSSDTAP (73 aa)) constitute a PAS 1 domain. K252 is covalently cross-linked (Glycyl lysine isopeptide (Lys-Gly) (interchain with G-Cter in SUMO2 and SUMO3)). Residue K259 forms a Glycyl lysine isopeptide (Lys-Gly) (interchain with G-Cter in SUMO); alternate linkage. Residue K259 forms a Glycyl lysine isopeptide (Lys-Gly) (interchain with G-Cter in SUMO2); alternate linkage. A PAS 2 domain is found at 326–396 (PQPVNGEIRV…ECHRQVLQTR (71 aa)). A Nuclear export signal 2 motif is present at residues 361 to 369 (LAYLPQELL). The region spanning 401 to 444 (TNCYKFKIKDGSFITLRSRWFSFMNPWTKEVEYIVSTNTVVLAN) is the PAC domain. Disordered stretches follow at residues 457-493 (TASP…AGAG) and 510-597 (RGSS…SNDE). A compositionally biased stretch (gly residues) spans 484–493 (IPGGTRAGAG). The segment at 508–588 (RIRGSSPSSC…IGIDMIDNDQ (81 aa)) is interaction with CIART. Residues 511–521 (GSSPSSCGSSP) are compositionally biased toward low complexity. An N6-acetyllysine modification is found at K538.

As to quaternary structure, component of the circadian clock oscillator which includes the CRY1/2 proteins, CLOCK or NPAS2, BMAL1 or BMAL2, CSNK1D and/or CSNK1E, TIMELESS and the PER1/2/3 proteins. Forms a heterodimer with CLOCK. The CLOCK-BMAL1 heterodimer is required for E-box-dependent transactivation, for CLOCK nuclear translocation and degradation, and, for phosphorylation of both CLOCK and BMAL1. Part of a nuclear complex which also includes RACK1 and PRKCA; RACK1 and PRKCA are recruited to the complex in a circadian manner. Interacts with NPAS2. Interacts with EZH2. Interacts with SUMO3. Interacts with SIRT1. Interacts with AHR. Interacts with ID1, ID2 and ID3. Interacts with DDX4. Interacts with OGT. Interacts with EED and SUZ12. Interacts with MTA1. Interacts with CIART. Interacts with HSP90. Interacts with KAT2B and EP300. Interacts with BHLHE40/DEC1 and BHLHE41/DEC2. Interacts with RELB and the interaction is enhanced in the presence of CLOCK. Interacts with PER1, PER2, CRY1 and CRY2 and this interaction requires a translocation to the nucleus. Interaction of the CLOCK-BMAL1 heterodimer with PER or CRY inhibits transcription activation. Interaction of the CLOCK-BMAL1 with CRY1 is independent of DNA but with PER2 is off DNA. The CLOCK-BMAL1 heterodimer interacts with GSK3B. Interacts with KDM5A. Interacts with KMT2A; in a circadian manner. Interacts with UBE3A. Interacts with PRKCG. Interacts with MAGEL2. Interacts with NCOA2. Interacts with THRAP3. The CLOCK-BMAL1 heterodimer interacts with PASD1. Interacts with PASD1. Interacts with USP9X. Interacts with PIWIL2 (via PIWI domain). Interacts with HDAC3. Interacts with HNF4A. Ubiquitinated, leading to its proteasomal degradation. Deubiquitinated by USP9X. In terms of processing, O-glycosylated; contains O-GlcNAc. O-glycosylation by OGT prevents protein degradation by inhibiting ubiquitination. It also stabilizes the CLOCK-BMAL1 heterodimer thereby increasing CLOCK-BMAL1-mediated transcription of genes in the negative loop of the circadian clock such as PER1/2/3 and CRY1/2. Post-translationally, acetylated on Lys-538 by CLOCK during the repression phase of the circadian cycle. Acetylation facilitates recruitment of CRY1 protein and initiates the repression phase of the circadian cycle. Acetylated at Lys-538 by KAT5 during the activation phase of the cycle, leading to recruitment of the positive transcription elongation factor b (P-TEFb) and BRD4, followed by productive elongation of circadian transcripts. Deacetylated by SIRT1, which may result in decreased protein stability. Phosphorylated upon dimerization with CLOCK. Phosphorylation enhances the transcriptional activity, alters the subcellular localization and decreases the stability of the CLOCK-BMAL1 heterodimer by promoting its degradation. Phosphorylation shows circadian variations in the liver with a peak between CT10 to CT14. Phosphorylation at Ser-90 by CK2 is essential for its nuclear localization, its interaction with CLOCK and controls CLOCK nuclear entry. Dephosphorylation at Ser-78 is important for dimerization with CLOCK and transcriptional activity. In terms of processing, sumoylated on Lys-259 upon dimerization with CLOCK. Predominantly conjugated to poly-SUMO2/3 rather than SUMO1 and the level of these conjugates undergo rhythmic variation, peaking at CT9-CT12. Sumoylation localizes it exclusively to the PML body and promotes its ubiquitination in the PML body, ubiquitin-dependent proteasomal degradation and the transcriptional activity of the CLOCK-BMAL1 heterodimer. Post-translationally, undergoes lysosome-mediated degradation in a time-dependent manner in the liver.

The protein localises to the nucleus. It localises to the cytoplasm. Its subcellular location is the PML body. Transcriptional activator which forms a core component of the circadian clock. The circadian clock, an internal time-keeping system, regulates various physiological processes through the generation of approximately 24 hour circadian rhythms in gene expression, which are translated into rhythms in metabolism and behavior. It is derived from the Latin roots 'circa' (about) and 'diem' (day) and acts as an important regulator of a wide array of physiological functions including metabolism, sleep, body temperature, blood pressure, endocrine, immune, cardiovascular, and renal function. Consists of two major components: the central clock, residing in the suprachiasmatic nucleus (SCN) of the brain, and the peripheral clocks that are present in nearly every tissue and organ system. Both the central and peripheral clocks can be reset by environmental cues, also known as Zeitgebers (German for 'timegivers'). The predominant Zeitgeber for the central clock is light, which is sensed by retina and signals directly to the SCN. The central clock entrains the peripheral clocks through neuronal and hormonal signals, body temperature and feeding-related cues, aligning all clocks with the external light/dark cycle. Circadian rhythms allow an organism to achieve temporal homeostasis with its environment at the molecular level by regulating gene expression to create a peak of protein expression once every 24 hours to control when a particular physiological process is most active with respect to the solar day. Transcription and translation of core clock components (CLOCK, NPAS2, BMAL1, BMAL2, PER1, PER2, PER3, CRY1 and CRY2) plays a critical role in rhythm generation, whereas delays imposed by post-translational modifications (PTMs) are important for determining the period (tau) of the rhythms (tau refers to the period of a rhythm and is the length, in time, of one complete cycle). A diurnal rhythm is synchronized with the day/night cycle, while the ultradian and infradian rhythms have a period shorter and longer than 24 hours, respectively. Disruptions in the circadian rhythms contribute to the pathology of cardiovascular diseases, cancer, metabolic syndromes and aging. A transcription/translation feedback loop (TTFL) forms the core of the molecular circadian clock mechanism. Transcription factors, CLOCK or NPAS2 and BMAL1 or BMAL2, form the positive limb of the feedback loop, act in the form of a heterodimer and activate the transcription of core clock genes and clock-controlled genes (involved in key metabolic processes), harboring E-box elements (5'-CACGTG-3') within their promoters. The core clock genes: PER1/2/3 and CRY1/2 which are transcriptional repressors form the negative limb of the feedback loop and interact with the CLOCK|NPAS2-BMAL1|BMAL2 heterodimer inhibiting its activity and thereby negatively regulating their own expression. This heterodimer also activates nuclear receptors NR1D1, NR1D2, RORA, RORB and RORG, which form a second feedback loop and which activate and repress BMAL1 transcription, respectively. BMAL1 positively regulates myogenesis and negatively regulates adipogenesis via the transcriptional control of the genes of the canonical Wnt signaling pathway. Plays a role in normal pancreatic beta-cell function; regulates glucose-stimulated insulin secretion via the regulation of antioxidant genes NFE2L2/NRF2 and its targets SESN2, PRDX3, CCLC and CCLM. Negatively regulates the mTORC1 signaling pathway; regulates the expression of MTOR and DEPTOR. Controls diurnal oscillations of Ly6C inflammatory monocytes; rhythmic recruitment of the PRC2 complex imparts diurnal variation to chemokine expression that is necessary to sustain Ly6C monocyte rhythms. Regulates the expression of HSD3B2, STAR, PTGS2, CYP11A1, CYP19A1 and LHCGR in the ovary and also the genes involved in hair growth. Plays an important role in adult hippocampal neurogenesis by regulating the timely entry of neural stem/progenitor cells (NSPCs) into the cell cycle and the number of cell divisions that take place prior to cell-cycle exit. Regulates the circadian expression of CIART. The CLOCK-BMAL1 heterodimer regulates the circadian expression of SERPINE1/PAI1, VWF, B3, CCRN4L/NOC, NAMPT, DBP, MYOD1, PPARGC1A, PPARGC1B, SIRT1, GYS2, F7, NGFR, GNRHR, BHLHE40/DEC1, ATF4, MTA1 and also genes implicated in glucose and lipid metabolism. Promotes rhythmic chromatin opening, regulating the DNA accessibility of other transcription factors. The NPAS2-BMAL1 heterodimer positively regulates the expression of MAOA, F7 and LDHA and modulates the circadian rhythm of daytime contrast sensitivity by regulating the rhythmic expression of adenylate cyclase type 1 (ADCY1) in the retina. The preferred binding motif for the CLOCK-BMAL1 heterodimer is 5'-CACGTGA-3', which contains a flanking adenine nucleotide at the 3-prime end of the canonical 6-nucleotide E-box sequence. CLOCK specifically binds to the half-site 5'-CAC-3', while BMAL1 binds to the half-site 5'-GTGA-3'. The CLOCK-BMAL1 heterodimer also recognizes the non-canonical E-box motifs 5'-AACGTGA-3' and 5'-CATGTGA-3'. Essential for the rhythmic interaction of CLOCK with ASS1 and plays a critical role in positively regulating CLOCK-mediated acetylation of ASS1. Plays a role in protecting against lethal sepsis by limiting the expression of immune checkpoint protein CD274 in macrophages in a PKM2-dependent manner. Regulates the diurnal rhythms of skeletal muscle metabolism via transcriptional activation of genes promoting triglyceride synthesis (DGAT2) and metabolic efficiency (COQ10B). This Equus caballus (Horse) protein is Basic helix-loop-helix ARNT-like protein 1 (BMAL1).